Consider the following 143-residue polypeptide: Nucleoside diphosphate kinase (143 aa).

The ATP site is built by K11, F59, R87, T93, R104, and N114. Catalysis depends on H117, which acts as the Pros-phosphohistidine intermediate.

Belongs to the NDK family. In terms of assembly, homotetramer. The cofactor is Mg(2+).

It localises to the cytoplasm. The catalysed reaction is a 2'-deoxyribonucleoside 5'-diphosphate + ATP = a 2'-deoxyribonucleoside 5'-triphosphate + ADP. It catalyses the reaction a ribonucleoside 5'-diphosphate + ATP = a ribonucleoside 5'-triphosphate + ADP. Functionally, major role in the synthesis of nucleoside triphosphates other than ATP. The ATP gamma phosphate is transferred to the NDP beta phosphate via a ping-pong mechanism, using a phosphorylated active-site intermediate. The chain is Nucleoside diphosphate kinase from Enterobacter sp. (strain 638).